The chain runs to 96 residues: Co-chaperonin GroES (96 aa).

It belongs to the GroES chaperonin family. Heptamer of 7 subunits arranged in a ring. Interacts with the chaperonin GroEL.

It is found in the cytoplasm. Its function is as follows. Together with the chaperonin GroEL, plays an essential role in assisting protein folding. The GroEL-GroES system forms a nano-cage that allows encapsulation of the non-native substrate proteins and provides a physical environment optimized to promote and accelerate protein folding. GroES binds to the apical surface of the GroEL ring, thereby capping the opening of the GroEL channel. The chain is Co-chaperonin GroES from Buchnera aphidicola subsp. Schizaphis graminum (strain Sg).